Here is a 304-residue protein sequence, read N- to C-terminus: Glycine--tRNA ligase alpha subunit (304 aa).

Belongs to the class-II aminoacyl-tRNA synthetase family. Tetramer of two alpha and two beta subunits.

The protein resides in the cytoplasm. The catalysed reaction is tRNA(Gly) + glycine + ATP = glycyl-tRNA(Gly) + AMP + diphosphate. This chain is Glycine--tRNA ligase alpha subunit, found in Afipia carboxidovorans (strain ATCC 49405 / DSM 1227 / KCTC 32145 / OM5) (Oligotropha carboxidovorans).